The following is an 83-amino-acid chain: Short neurotoxin 3FTx-Oxy4 (83 aa).

Residues 1–21 (MKTLLLTLVVVTIVCLDLGYT) form the signal peptide. 4 cysteine pairs are disulfide-bonded: Cys-24–Cys-45, Cys-38–Cys-62, Cys-64–Cys-75, and Cys-76–Cys-81.

The protein belongs to the three-finger toxin family. Short-chain subfamily. Type I alpha-neurotoxin sub-subfamily. In terms of tissue distribution, expressed by the venom gland.

The protein resides in the secreted. Its function is as follows. Binds to muscle nicotinic acetylcholine receptor (nAChR) and inhibit acetylcholine from binding to the receptor, thereby impairing neuromuscular transmission. This is Short neurotoxin 3FTx-Oxy4 from Oxyuranus microlepidotus (Inland taipan).